We begin with the raw amino-acid sequence, 504 residues long: WD repeat-containing protein 55 homolog (504 aa).

Over residues 32-49 (QEVVNESDSEIGEYDLGD) the composition is skewed to acidic residues. Residues 32-135 (QEVVNESDSE…NAFDMDEDDE (104 aa)) are disordered. Positions 66–76 (DSISSDGSFNP) are enriched in polar residues. Positions 77-95 (NDEDSDTDSDDSMLDEPDE) are enriched in acidic residues. Residues 114–124 (SGSSNRNQDSD) are compositionally biased toward polar residues. 6 WD repeats span residues 158–197 (KLED…NKLL), 202–241 (VHAK…LKKL), 245–283 (AHDD…SIFE), 286–325 (EIED…LYVQ), 328–367 (PYEE…YHCD), and 412–451 (QHNM…DFGD). The tract at residues 484 to 504 (AKEDNNDNENDDATAGPSNTT) is disordered.

Belongs to the WD repeat WDR55 family.

This Drosophila willistoni (Fruit fly) protein is WD repeat-containing protein 55 homolog.